A 253-amino-acid polypeptide reads, in one-letter code: Probable transcriptional regulatory protein RPR_05505 (253 aa).

The protein belongs to the TACO1 family.

It localises to the cytoplasm. In Rickettsia peacockii (strain Rustic), this protein is Probable transcriptional regulatory protein RPR_05505.